Here is a 378-residue protein sequence, read N- to C-terminus: MKILVDENMPYARDLFSRLGEVIAVPGRPIPVAQLADADALMVRSVTKVNESLLAGKPIKFVGTATAGTDHVDEAWLKQAGIGFSAAPGCNAIAVVEYVFSSLLMLAERDGFSLHERTVGIVGVGNVGRRLQARLEALGIKTLLCDPPRADCGDEGDFRSLDELVQRADILTFHTPLFKDGPYKTLHLADEKLIRSLKPGAILINACRGAVVDNTALLTCLNEGQKLSVVLDVWEGEPELNVELLTKVDIGTPHIAGYTLEGKARGTTQVFEAYSKFIGHEQHVALDTLLPAPEFGRITLHGPLDQPTLKRLVHLVYDVRRDDAPLRKVAGIPGEFDKLRKNYLERREWSSLYVICDDASAASLLCKLGFNAVHHPAR.

The substrate site is built by S45 and T66. 2 residues coordinate NAD(+): D146 and T175. The active site involves R208. D232 is a binding site for NAD(+). The active site involves E237. The active-site Proton donor is H254. G257 contributes to the NAD(+) binding site. Y258 is a substrate binding site.

It belongs to the D-isomer specific 2-hydroxyacid dehydrogenase family. PdxB subfamily. Homodimer.

It is found in the cytoplasm. It carries out the reaction 4-phospho-D-erythronate + NAD(+) = (R)-3-hydroxy-2-oxo-4-phosphooxybutanoate + NADH + H(+). The protein operates within cofactor biosynthesis; pyridoxine 5'-phosphate biosynthesis; pyridoxine 5'-phosphate from D-erythrose 4-phosphate: step 2/5. Its function is as follows. Catalyzes the oxidation of erythronate-4-phosphate to 3-hydroxy-2-oxo-4-phosphonooxybutanoate. The chain is Erythronate-4-phosphate dehydrogenase from Escherichia coli O157:H7.